We begin with the raw amino-acid sequence, 110 residues long: MSISQSDASLAAVPAVDQFDPSSGASGGYDTPLGITNPPIDELLDRVSSKYALVIYAAKRARQINDYYNQLGEGILEYVGPLVEPGLQEKPLSIALREIHADLLEHTEGE.

This sequence belongs to the RNA polymerase subunit omega family. As to quaternary structure, the RNAP catalytic core consists of 2 alpha, 1 beta, 1 beta' and 1 omega subunit. When a sigma factor is associated with the core the holoenzyme is formed, which can initiate transcription.

It catalyses the reaction RNA(n) + a ribonucleoside 5'-triphosphate = RNA(n+1) + diphosphate. Functionally, promotes RNA polymerase assembly. Latches the N- and C-terminal regions of the beta' subunit thereby facilitating its interaction with the beta and alpha subunits. This is DNA-directed RNA polymerase subunit omega (rpoZ) from Mycobacterium bovis (strain ATCC BAA-935 / AF2122/97).